A 253-amino-acid chain; its full sequence is Ubiquinone/menaquinone biosynthesis C-methyltransferase UbiE (253 aa).

Residues threonine 76, aspartate 97, and 125–126 (NA) each bind S-adenosyl-L-methionine.

This sequence belongs to the class I-like SAM-binding methyltransferase superfamily. MenG/UbiE family.

It catalyses the reaction a 2-demethylmenaquinol + S-adenosyl-L-methionine = a menaquinol + S-adenosyl-L-homocysteine + H(+). It carries out the reaction a 2-methoxy-6-(all-trans-polyprenyl)benzene-1,4-diol + S-adenosyl-L-methionine = a 5-methoxy-2-methyl-3-(all-trans-polyprenyl)benzene-1,4-diol + S-adenosyl-L-homocysteine + H(+). Its pathway is quinol/quinone metabolism; menaquinone biosynthesis; menaquinol from 1,4-dihydroxy-2-naphthoate: step 2/2. It functions in the pathway cofactor biosynthesis; ubiquinone biosynthesis. Its function is as follows. Methyltransferase required for the conversion of demethylmenaquinol (DMKH2) to menaquinol (MKH2) and the conversion of 2-polyprenyl-6-methoxy-1,4-benzoquinol (DDMQH2) to 2-polyprenyl-3-methyl-6-methoxy-1,4-benzoquinol (DMQH2). The chain is Ubiquinone/menaquinone biosynthesis C-methyltransferase UbiE from Bradyrhizobium diazoefficiens (strain JCM 10833 / BCRC 13528 / IAM 13628 / NBRC 14792 / USDA 110).